The sequence spans 222 residues: 26S proteasome non-ATPase regulatory subunit 9 (222 aa).

The 87-residue stretch at 108-194 (QARDMAEARE…KPLNVTVIRR (87 aa)) folds into the PDZ domain. Position 128 is a phosphoserine (S128).

This sequence belongs to the proteasome subunit p27 family. In terms of assembly, interacts with PSMC3. Part of a transient complex (modulator) containing PSMD9, PSMC6 and PSMC3 formed during the assembly of the 26S proteasome.

Functionally, acts as a chaperone during the assembly of the 26S proteasome, specifically of the base subcomplex of the PA700/19S regulatory complex (RC). During the base subcomplex assembly is part of an intermediate PSMD9:PSMC6:PSMC3 module, also known as modulator trimer complex; PSMD9 is released during the further base assembly process. The polypeptide is 26S proteasome non-ATPase regulatory subunit 9 (Psmd9) (Mus musculus (Mouse)).